A 259-amino-acid polypeptide reads, in one-letter code: Small ribosomal subunit protein uS2 (259 aa).

It belongs to the universal ribosomal protein uS2 family.

The chain is Small ribosomal subunit protein uS2 from Streptococcus pneumoniae serotype 4 (strain ATCC BAA-334 / TIGR4).